A 341-amino-acid polypeptide reads, in one-letter code: MKRKVLRVIDGETVFPPPIWMMRQAGRYLPEYRETRKKAGSFLDLCYSPDLAVEVTLQPIRRFGFDAAILFSDILVIPHALGRDLRFEEGKGPLMTPIDADEIFWLETEGVAKRLEPVYETVRLLREQLPDETTLLGFCGAPWTVATYMIAGHGTPDQAPARLFAYRFPEAFEKLLNDLADVSAEYLIEQLDAGADAVQIFDSWSGVLDEDCFERFCIRPVARIVQKVRAVYPEARIIGFPKGAGMLYAGYREKTGVDALGLDWSVPFSFAAALQEEGAIQGNLDPLRVVAGGNALDEGVDTILERLGQGPLIFNLGHGITPQAPIENVQRMIDRIRGGKS.

Substrate-binding positions include 23–27 (RQAGR), Asp-73, Tyr-148, Ser-203, and His-318.

It belongs to the uroporphyrinogen decarboxylase family. Homodimer.

It is found in the cytoplasm. The enzyme catalyses uroporphyrinogen III + 4 H(+) = coproporphyrinogen III + 4 CO2. It functions in the pathway porphyrin-containing compound metabolism; protoporphyrin-IX biosynthesis; coproporphyrinogen-III from 5-aminolevulinate: step 4/4. Functionally, catalyzes the decarboxylation of four acetate groups of uroporphyrinogen-III to yield coproporphyrinogen-III. The polypeptide is Uroporphyrinogen decarboxylase (Brucella anthropi (strain ATCC 49188 / DSM 6882 / CCUG 24695 / JCM 21032 / LMG 3331 / NBRC 15819 / NCTC 12168 / Alc 37) (Ochrobactrum anthropi)).